The primary structure comprises 2222 residues: DNA polymerase epsilon catalytic subunit A (2222 aa).

The tract at residues 90 to 110 (ETLSSGSNGGGNSNDGERVTT) is disordered. 4 residues coordinate Zn(2+): C2108, C2111, C2130, and C2133. Residues 2108 to 2133 (CEYCFFISDIDFCKAAPESIFSCVRC) form a CysA-type zinc finger. [4Fe-4S] cluster contacts are provided by C2164, C2167, C2179, and C2181. A CysB motif motif is present at residues 2164–2181 (CSRCHKVKRDYMSAHCPC).

This sequence belongs to the DNA polymerase type-B family. DNA polymerase epsilon is a heterotetramer consisting of POL2, DPB2, DPB3 and DPB4. Requires [4Fe-4S] cluster as cofactor.

The protein localises to the nucleus. The enzyme catalyses DNA(n) + a 2'-deoxyribonucleoside 5'-triphosphate = DNA(n+1) + diphosphate. Its function is as follows. Catalytic component of the DNA polymerase epsilon complex which participates in chromosomal DNA replication. Required during synthesis of the leading DNA strands at the replication fork, binds at/or near replication origins and moves along DNA with the replication fork. Has 3'-5' proofreading exonuclease activity that corrects errors arising during DNA replication. This is DNA polymerase epsilon catalytic subunit A (POL2) from Saccharomyces cerevisiae (strain ATCC 204508 / S288c) (Baker's yeast).